A 137-amino-acid polypeptide reads, in one-letter code: Basic phospholipase A2 homolog Pgo-K49 (137 aa).

The first 16 residues, 1 to 16 (MRTLLIVAVLLVGVEG), serve as a signal peptide directing secretion. 7 disulfides stabilise this stretch: cysteine 42–cysteine 131, cysteine 44–cysteine 60, cysteine 59–cysteine 111, cysteine 65–cysteine 137, cysteine 66–cysteine 104, cysteine 73–cysteine 97, and cysteine 91–cysteine 102. The tract at residues 121 to 133 (KKYKIHMKFFCKK) is important for membrane-damaging activities in eukaryotes and bacteria; heparin-binding.

As to expression, expressed by the venom gland.

The protein resides in the secreted. Its function is as follows. Snake venom phospholipase A2 homolog that lacks enzymatic activity. Is myotoxic. A model of myotoxic mechanism has been proposed: an apo Lys49-PLA2 is activated by the entrance of a hydrophobic molecule (e.g. fatty acid) at the hydrophobic channel of the protein leading to a reorientation of a monomer. This reorientation causes a transition between 'inactive' to 'active' states, causing alignment of C-terminal and membrane-docking sites (MDoS) side-by-side and putting the membrane-disruption sites (MDiS) in the same plane, exposed to solvent and in a symmetric position for both monomers. The MDoS region stabilizes the toxin on membrane by the interaction of charged residues with phospholipid head groups. Subsequently, the MDiS region destabilizes the membrane with penetration of hydrophobic residues. This insertion causes a disorganization of the membrane, allowing an uncontrolled influx of ions (i.e. calcium and sodium), and eventually triggering irreversible intracellular alterations and cell death. The sequence is that of Basic phospholipase A2 homolog Pgo-K49 from Cerrophidion godmani (Porthidium godmani).